Here is a 935-residue protein sequence, read N- to C-terminus: C-1-tetrahydrofolate synthase, cytoplasmic (935 aa).

Methionine 1 is modified (N-acetylmethionine). The methylenetetrahydrofolate dehydrogenase and methenyltetrahydrofolate cyclohydrolase (D/C) domain stretch occupies residues 2-291 (APAGILNGKV…MLMQSTVESA (290 aa)). Residues 52–56 (YINVK) and 99–101 (VQL) contribute to the substrate site. Lysine 56 is an active-site residue. NADP(+) contacts are provided by residues 172 to 174 (GRS) and serine 197. 272–276 (PGGVG) is a binding site for substrate. The formyltetrahydrofolate synthetase domain stretch occupies residues 310–935 (LNLKTPVPSD…PETEQVNGLF (626 aa)). Serine 318 is modified (phosphoserine). 380–387 (TPLGEGKS) is a binding site for ATP. A phosphoserine mark is found at serine 413 and serine 490.

This sequence in the N-terminal section; belongs to the tetrahydrofolate dehydrogenase/cyclohydrolase family. It in the C-terminal section; belongs to the formate--tetrahydrofolate ligase family. Homodimer.

The protein localises to the cytoplasm. It catalyses the reaction (6R)-5,10-methylene-5,6,7,8-tetrahydrofolate + NADP(+) = (6R)-5,10-methenyltetrahydrofolate + NADPH. The catalysed reaction is (6R)-5,10-methenyltetrahydrofolate + H2O = (6R)-10-formyltetrahydrofolate + H(+). The enzyme catalyses (6S)-5,6,7,8-tetrahydrofolate + formate + ATP = (6R)-10-formyltetrahydrofolate + ADP + phosphate. Its pathway is one-carbon metabolism; tetrahydrofolate interconversion. Its function is as follows. Trifunctional enzyme that catalyzes the interconversion of three forms of one-carbon-substituted tetrahydrofolate: (6R)-5,10-methylene-5,6,7,8-tetrahydrofolate, 5,10-methenyltetrahydrofolate and (6S)-10-formyltetrahydrofolate. These derivatives of tetrahydrofolate are differentially required in nucleotide and amino acid biosynthesis, (6S)-10-formyltetrahydrofolate being required for purine biosynthesis while (6R)-5,10-methylene-5,6,7,8-tetrahydrofolate is used for serine and methionine biosynthesis for instance. The polypeptide is C-1-tetrahydrofolate synthase, cytoplasmic (Mthfd1) (Rattus norvegicus (Rat)).